Here is a 166-residue protein sequence, read N- to C-terminus: Thiol peroxidase (166 aa).

The Thioredoxin domain occupies 18–164 (VKVGDKAPNF…YEKAIEAAKA (147 aa)). C60 acts as the Cysteine sulfenic acid (-SOH) intermediate in catalysis. Cysteines 60 and 94 form a disulfide.

This sequence belongs to the peroxiredoxin family. Tpx subfamily. Homodimer.

The catalysed reaction is a hydroperoxide + [thioredoxin]-dithiol = an alcohol + [thioredoxin]-disulfide + H2O. In terms of biological role, thiol-specific peroxidase that catalyzes the reduction of hydrogen peroxide and organic hydroperoxides to water and alcohols, respectively. Plays a role in cell protection against oxidative stress by detoxifying peroxides. The protein is Thiol peroxidase of Halalkalibacterium halodurans (strain ATCC BAA-125 / DSM 18197 / FERM 7344 / JCM 9153 / C-125) (Bacillus halodurans).